The chain runs to 65 residues: Neurotoxin BmK-M3 (65 aa).

The region spanning 2-64 is the LCN-type CS-alpha/beta domain; sequence RDAYIAKPEN…VPIRVWGKCH (63 aa). Cystine bridges form between C12–C63, C16–C36, C22–C46, and C26–C48.

The protein belongs to the long (4 C-C) scorpion toxin superfamily. Sodium channel inhibitor family. Alpha subfamily. As to expression, expressed by the venom gland.

Its subcellular location is the secreted. Its function is as follows. Binds to sodium channels (Nav) and inhibits the inactivation of the activated channels, thereby blocking neuronal transmission. The polypeptide is Neurotoxin BmK-M3 (Olivierus martensii (Manchurian scorpion)).